A 453-amino-acid polypeptide reads, in one-letter code: Armadillo repeat-containing X-linked protein 1 (453 aa).

Over 1–6 (MGRTRE) the chain is Mitochondrial intermembrane. 2 mitochondrion outer membrane (MOM)-targeting sequence regions span residues 1–6 (MGRTRE) and 26–36 (RLAWGRDENEK). The chain crosses the membrane as a helical; Signal-anchor span at residues 7–29 (AGCVAAGVVIGAGACYCVYRLAW). The Cytoplasmic portion of the chain corresponds to 30-453 (GRDENEKIWD…VKVLKVLTKL (424 aa)). 2 disordered regions span residues 58 to 77 (AKTNAGAGSGAKLQGDSEVK) and 132 to 182 (ISGN…RAPA). A compositionally biased stretch (basic residues) spans 167–177 (GKSKGKARSKS). ARM repeat units lie at residues 195-235 (PYKI…NNAA), 237-276 (SFNQNAIRELGGVPIIAKLIKTKDPIIREKTYNALNNLSV), 358-398 (PAMT…NIND), and 415-453 (SSLFFLFKESGVCVKKIKALANHNDLVVKVKVLKVLTKL).

Belongs to the eutherian X-chromosome-specific Armcx family. Interacts with MIRO1. Expressed at high levels ovary, heart, testis, prostate, brain, spleen and colon. Expressed at very low levels in liver and thymus. Not expressed in peripheral blood leukocytes. Not or reduced expressed in lung, prostate, colon, pancreas and ovarian carcinomas.

Its subcellular location is the mitochondrion. It localises to the mitochondrion outer membrane. Its function is as follows. Regulates mitochondrial transport during axon regeneration. Increases the proportion of motile mitochondria by recruiting stationary mitochondria into the motile pool. Enhances mitochondria movement and neurite growth in both adult axons and embryonic neurons. Promotes neuronal survival and axon regeneration after nerve injury. May link mitochondria to the Trak1-kinesin motor complex via its interaction with MIRO1. This Homo sapiens (Human) protein is Armadillo repeat-containing X-linked protein 1 (ARMCX1).